Consider the following 309-residue polypeptide: Homoserine kinase (309 aa).

91-101 (PIGSGLGSSAC) is an ATP binding site.

It belongs to the GHMP kinase family. Homoserine kinase subfamily.

The protein localises to the cytoplasm. It catalyses the reaction L-homoserine + ATP = O-phospho-L-homoserine + ADP + H(+). It participates in amino-acid biosynthesis; L-threonine biosynthesis; L-threonine from L-aspartate: step 4/5. Functionally, catalyzes the ATP-dependent phosphorylation of L-homoserine to L-homoserine phosphate. This is Homoserine kinase from Photorhabdus laumondii subsp. laumondii (strain DSM 15139 / CIP 105565 / TT01) (Photorhabdus luminescens subsp. laumondii).